The sequence spans 422 residues: Large ribosomal subunit protein uL4 (422 aa).

Residue alanine 2 is modified to N-acetylalanine. Lysine 14 bears the N6-acetyllysine mark. An Omega-N-methylarginine modification is found at arginine 97. The residue at position 106 (lysine 106) is an N6-acetyllysine. Lysine 239 is covalently cross-linked (Glycyl lysine isopeptide (Lys-Gly) (interchain with G-Cter in SUMO2)). An N6-acetyllysine modification is found at lysine 259. Threonine 266 carries the phosphothreonine modification. 2 positions are modified to phosphoserine: serine 290 and serine 295. At arginine 300 the chain carries Citrulline. Residue lysine 327 forms a Glycyl lysine isopeptide (Lys-Gly) (interchain with G-Cter in SUMO2) linkage. An N6-acetyllysine mark is found at lysine 333 and lysine 353. The interval 359 to 422 (EAKSDQKGVQ…PTSEEKKAAA (64 aa)) is disordered. Residue lysine 361 is modified to N6-acetyllysine; alternate. Lysine 361 is covalently cross-linked (Glycyl lysine isopeptide (Lys-Gly) (interchain with G-Cter in SUMO1); alternate). Position 362 is a phosphoserine (serine 362). Basic and acidic residues-rich tracts occupy residues 376–385 (NKEKKAVGDK) and 402–422 (PAAE…KAAA).

It belongs to the universal ribosomal protein uL4 family. In terms of assembly, component of the large ribosomal subunit. May bind IPO9 with low affinity. Interacts with RBM3. Citrullinated by PADI4.

Its subcellular location is the cytoplasm. In terms of biological role, component of the large ribosomal subunit. The ribosome is a large ribonucleoprotein complex responsible for the synthesis of proteins in the cell. This chain is Large ribosomal subunit protein uL4 (RPL4), found in Bos taurus (Bovine).